The sequence spans 164 residues: Phosphopantetheine adenylyltransferase (164 aa).

Residue threonine 14 participates in substrate binding. ATP is bound by residues 14–15 (TF) and histidine 22. Residues lysine 46, leucine 78, and arginine 92 each contribute to the substrate site. Residues 93–95 (GLR), glutamate 103, and 128–134 (HAFISST) each bind ATP.

Belongs to the bacterial CoaD family. As to quaternary structure, homohexamer. Mg(2+) is required as a cofactor.

The protein resides in the cytoplasm. The catalysed reaction is (R)-4'-phosphopantetheine + ATP + H(+) = 3'-dephospho-CoA + diphosphate. The protein operates within cofactor biosynthesis; coenzyme A biosynthesis; CoA from (R)-pantothenate: step 4/5. Functionally, reversibly transfers an adenylyl group from ATP to 4'-phosphopantetheine, yielding dephospho-CoA (dPCoA) and pyrophosphate. In Vibrio cholerae serotype O1 (strain ATCC 39541 / Classical Ogawa 395 / O395), this protein is Phosphopantetheine adenylyltransferase.